Here is a 102-residue protein sequence, read N- to C-terminus: RNA-binding protein Hfq (102 aa).

The region spanning 9 to 68 is the Sm domain; the sequence is DPFLNALRRERVPVSIYLVNGIKLQGQIESFDQFVILLKNTVSQMVYKHAISTVVPSRPV. The tract at residues 64–102 is disordered; that stretch reads PSRPVSHHSNTPSGGTSNYHHGNNPSAPQQPQQESDDAE. Polar residues predominate over residues 70-96; that stretch reads HHSNTPSGGTSNYHHGNNPSAPQQPQQ.

It belongs to the Hfq family. As to quaternary structure, homohexamer.

RNA chaperone that binds small regulatory RNA (sRNAs) and mRNAs to facilitate mRNA translational regulation in response to envelope stress, environmental stress and changes in metabolite concentrations. Also binds with high specificity to tRNAs. The chain is RNA-binding protein Hfq from Serratia proteamaculans (strain 568).